We begin with the raw amino-acid sequence, 753 residues long: Serine/threonine-protein phosphatase with EF-hands 2 (753 aa).

Residues 21–46 enclose the IQ domain; that stretch reads KAAALIQRWYRRYVARLEMRRRCTWS. The segment at 128–540 is catalytic; that stretch reads ATALVEAFRL…PHIVQYQANK (413 aa). Residues D179, H181, D208, and N240 each coordinate Mn(2+). The active-site Proton donor is the H241. Residue H292 coordinates Mn(2+). Disordered stretches follow at residues 318-382 and 409-435; these read CKTR…GSLD and VTGE…KPTQ. Positions 322–333 are enriched in basic and acidic residues; that stretch reads QKSEKQMEEKRR. A compositionally biased stretch (low complexity) spans 348–361; it reads LPESRSLPSSPLRL. Residues 366 to 377 show a composition bias toward polar residues; that stretch reads AQKTSRSSSIPC. Residue H488 participates in Mn(2+) binding. 3 EF-hand domains span residues 568-603, 652-687, and 692-727; these read AHSS…VLHL, RNRS…FSSH, and ITDD…VEKS. Residues D665, D667, S669, E676, D705, N707, D709, H711, and E716 each contribute to the Ca(2+) site. Residues 732-753 are disordered; it reads DASECPQATNAKDSGCSSPGAH. Polar residues predominate over residues 737-753; that stretch reads PQATNAKDSGCSSPGAH.

Belongs to the PPP phosphatase family. The cofactor is Mn(2+). In terms of tissue distribution, retinal specific.

It is found in the cytoplasm. Its subcellular location is the cell projection. The protein localises to the cilium. The protein resides in the photoreceptor outer segment. It localises to the photoreceptor inner segment. The catalysed reaction is O-phospho-L-seryl-[protein] + H2O = L-seryl-[protein] + phosphate. It carries out the reaction O-phospho-L-threonyl-[protein] + H2O = L-threonyl-[protein] + phosphate. Its activity is regulated as follows. Activated by calcium. Its function is as follows. May play a role in phototransduction. May dephosphorylate photoactivated rhodopsin. May function as a calcium sensing regulator of ionic currents, energy production or synaptic transmission. The polypeptide is Serine/threonine-protein phosphatase with EF-hands 2 (PPEF2) (Homo sapiens (Human)).